The primary structure comprises 75 residues: Small integral membrane protein 7-A (75 aa).

Positions 1–17 (MIGDLLLFGTLLVNAGA) are cleaved as a signal peptide. The Extracellular segment spans residues 18–53 (VLNFKLKKKESQGFGDDLTEATTGDNIREFLLSLRY). Residues 54 to 74 (FRIFIALWNIFMMFCMIVLFG) form a helical membrane-spanning segment. Ser75 is a topological domain (cytoplasmic).

The protein belongs to the SMIM7 family.

The protein resides in the membrane. This Xenopus laevis (African clawed frog) protein is Small integral membrane protein 7-A (smim7-a).